Consider the following 59-residue polypeptide: Large ribosomal subunit protein bL32 (59 aa).

A compositionally biased stretch (basic residues) spans 1 to 16 (MAVPKRKTSPSRRGMR). Residues 1 to 59 (MAVPKRKTSPSRRGMRRSADALKAPTYVEDKNSGELRRPHHIDLKSGMYRGRQVLEPKE) form a disordered region. Residues 28–44 (VEDKNSGELRRPHHIDL) are compositionally biased toward basic and acidic residues.

This sequence belongs to the bacterial ribosomal protein bL32 family.

This Brucella abortus (strain S19) protein is Large ribosomal subunit protein bL32.